Consider the following 124-residue polypeptide: MRHYEIVFIVHPDQSEQVPAMIERYKTTITTHGGQIHRVEDWGRRQLAYMIEKLAKAHYVCMNIECDQTTLDELEHAFKFNDAVLRHLIVKMKKAETGPSPMMKEVQREEAKKAAAAQPAEAQA.

The disordered stretch occupies residues 96–124 (ETGPSPMMKEVQREEAKKAAAAQPAEAQA). Positions 114 to 124 (AAAAQPAEAQA) are enriched in low complexity.

This sequence belongs to the bacterial ribosomal protein bS6 family.

Binds together with bS18 to 16S ribosomal RNA. This is Small ribosomal subunit protein bS6 from Burkholderia orbicola (strain AU 1054).